Here is a 215-residue protein sequence, read N- to C-terminus: Riboflavin synthase (215 aa).

Lumazine-binding repeat units lie at residues 1–96 (MFTG…FGGH) and 97–193 (IVSG…EQFL). 2,4-dihydroxypteridine contacts are provided by residues 4–6 (GII), 47–49 (CLT), 61–66 (DVMSET), 100–102 (GHI), K135, 144–146 (SLT), and 158–163 (SIIPHT).

As to quaternary structure, homotrimer.

The catalysed reaction is 2 6,7-dimethyl-8-(1-D-ribityl)lumazine + H(+) = 5-amino-6-(D-ribitylamino)uracil + riboflavin. It functions in the pathway cofactor biosynthesis; riboflavin biosynthesis; riboflavin from 2-hydroxy-3-oxobutyl phosphate and 5-amino-6-(D-ribitylamino)uracil: step 2/2. Functionally, catalyzes the dismutation of two molecules of 6,7-dimethyl-8-ribityllumazine, resulting in the formation of riboflavin and 5-amino-6-(D-ribitylamino)uracil. In Actinobacillus pleuropneumoniae (Haemophilus pleuropneumoniae), this protein is Riboflavin synthase (ribE).